Consider the following 242-residue polypeptide: UPF0173 metal-dependent hydrolase APE_1117 (242 aa).

Belongs to the UPF0173 family.

This Aeropyrum pernix (strain ATCC 700893 / DSM 11879 / JCM 9820 / NBRC 100138 / K1) protein is UPF0173 metal-dependent hydrolase APE_1117.